Reading from the N-terminus, the 393-residue chain is MMRYPEHADPVITLTAGPVNAYPEVLRGLGRTVLYDYDPAFQLLYEKVVDKAQKAMRLSNKPVILHGEPVLGLEAAAASLISPDDVVLNLASGVYGKGFGYWAKRYSPHLLEIEVPYNEAIDPQAVADMLKAHPEITVVSVCHHDTPSGTINPIDAIGALVSAHGAYLIVDAVSSFGGMKTHPEDCKADIYVTGPNKCLGAPPGLTMMGVSERAWAKMKANPLAPRASMLSIVDWENAWSRDKPFPFTPSVSEINGLDVALDLYLNEGPEAVWARHALTAKAMRAGVTAMGLSVWAASDSIASPTTTAVRTPDGVDEKALRQAARARYGVVFSSGRGETLGKLTRIGHMGPTAQPIYAIAALTALGGAMNAAGRKLAIGKGIEAALAVIDADA.

Residues E68, Y95, and T146 each contribute to the pyridoxal 5'-phosphate site. N6-(pyridoxal phosphate)lysine is present on K197. Residue R345 participates in pyridoxal 5'-phosphate binding.

It belongs to the class-V pyridoxal-phosphate-dependent aminotransferase family. In terms of assembly, homotetramer. Pyridoxal 5'-phosphate is required as a cofactor.

The enzyme catalyses pyridoxamine + pyruvate = pyridoxal + L-alanine. Catalyzes a reversible transamination reaction between pyridoxamine and pyruvate to form pyridoxal and L-alanine. This is Pyridoxamine--pyruvate transaminase (ppaT) from Mesorhizobium japonicum (strain LMG 29417 / CECT 9101 / MAFF 303099) (Mesorhizobium loti (strain MAFF 303099)).